The following is a 311-amino-acid chain: Nod factor export ATP-binding protein I (311 aa).

The 231-residue stretch at 13-243 folds into the ABC transporter domain; the sequence is IDLAGVSKSY…QIGCPVIEIY (231 aa). 45 to 52 is a binding site for ATP; it reads GPNGAGKS.

It belongs to the ABC transporter superfamily. Lipooligosaccharide exporter (TC 3.A.1.102) family. In terms of assembly, the complex is composed of two ATP-binding proteins (NodI) and two transmembrane proteins (NodJ).

It is found in the cell inner membrane. Its function is as follows. Part of the ABC transporter complex NodIJ involved in the export of the nodulation factors (Nod factors), the bacterial signal molecules that induce symbiosis and subsequent nodulation induction. Nod factors are LCO (lipo-chitin oligosaccharide), a modified beta-1,4-linked N-acetylglucosamine oligosaccharide. This subunit is responsible for energy coupling to the transport system. This is Nod factor export ATP-binding protein I from Rhizobium leguminosarum bv. viciae.